The following is a 215-amino-acid chain: Oligoribonuclease (215 aa).

The 166-residue stretch at 5-170 (LVWIDCEMTG…ADIHESIREL (166 aa)) folds into the Exonuclease domain. The active site involves Tyr-127.

It belongs to the oligoribonuclease family.

Its subcellular location is the cytoplasm. Its function is as follows. 3'-to-5' exoribonuclease specific for small oligoribonucleotides. This is Oligoribonuclease from Mycobacterium ulcerans (strain Agy99).